A 1233-amino-acid chain; its full sequence is ATP-dependent helicase/nuclease subunit A (1233 aa).

In terms of domain architecture, UvrD-like helicase ATP-binding spans 3 to 474 (TKWTEEQKQA…ILLYKNFRSR (472 aa)). 24–31 (AAAGSGKT) provides a ligand contact to ATP. Positions 518-809 (VTGGAVELHL…RIMSIHKSKG (292 aa)) constitute a UvrD-like helicase C-terminal domain. A disordered region spans residues 533-555 (VEEEVEEKEEEKNEEKDFEEEEE).

This sequence belongs to the helicase family. AddA subfamily. In terms of assembly, heterodimer of AddA and AddB/RexB. The cofactor is Mg(2+).

It catalyses the reaction Couples ATP hydrolysis with the unwinding of duplex DNA by translocating in the 3'-5' direction.. The catalysed reaction is ATP + H2O = ADP + phosphate + H(+). The heterodimer acts as both an ATP-dependent DNA helicase and an ATP-dependent, dual-direction single-stranded exonuclease. Recognizes the chi site generating a DNA molecule suitable for the initiation of homologous recombination. The AddA nuclease domain is required for chi fragment generation; this subunit has the helicase and 3' -&gt; 5' nuclease activities. This is ATP-dependent helicase/nuclease subunit A from Thermoanaerobacter sp. (strain X514).